The sequence spans 132 residues: Tyrosine phosphatase-like protein N2 (132 aa).

A Tyrosine-protein phosphatase domain is found at 1 to 132 (MQGPMKNTVA…DILGRFQRVF (132 aa)).

This sequence belongs to the protein-tyrosine phosphatase family.

This Microplitis demolitor (Parasitoid wasp) protein is Tyrosine phosphatase-like protein N2 (N4).